A 561-amino-acid polypeptide reads, in one-letter code: 3beta-hydroxysteroid-dehydrogenase/decarboxylase isoform 3 (561 aa).

NAD(+) is bound at residue Lys166. The 183-residue stretch at 379-561 folds into the Reticulon domain; that stretch reads VADILLWRNE…SDASSKPMFM (183 aa). A run of 3 helical transmembrane segments spans residues 392–412, 420–440, and 504–524; these read FVSF…GNTF, LFIF…IFGF, and SLAA…FIYE.

The protein belongs to the 3-beta-HSD family.

Its subcellular location is the endoplasmic reticulum membrane. It carries out the reaction a 3beta-hydroxysteroid-4alpha-carboxylate + NADP(+) = a 3-oxosteroid + CO2 + NADPH. It catalyses the reaction a 3beta-hydroxysteroid-4alpha-carboxylate + NAD(+) = a 3-oxosteroid + CO2 + NADH. It functions in the pathway steroid biosynthesis; zymosterol biosynthesis; zymosterol from lanosterol: step 4/6. The chain is 3beta-hydroxysteroid-dehydrogenase/decarboxylase isoform 3 (3BETAHSD/D3) from Arabidopsis thaliana (Mouse-ear cress).